A 195-amino-acid chain; its full sequence is UPF0316 protein Pcar_2434 (195 aa).

Helical transmembrane passes span 13 to 33 (LFLL…IGTL), 45 to 65 (WAGV…SQVM), and 71 to 91 (VWTY…GVLI).

The protein belongs to the UPF0316 family.

It localises to the cell membrane. This Syntrophotalea carbinolica (strain DSM 2380 / NBRC 103641 / GraBd1) (Pelobacter carbinolicus) protein is UPF0316 protein Pcar_2434.